Consider the following 199-residue polypeptide: 7-methyl-GTP pyrophosphatase (199 aa).

Aspartate 76 acts as the Proton acceptor in catalysis.

This sequence belongs to the Maf family. YceF subfamily. It depends on a divalent metal cation as a cofactor.

The protein resides in the cytoplasm. It catalyses the reaction N(7)-methyl-GTP + H2O = N(7)-methyl-GMP + diphosphate + H(+). Nucleoside triphosphate pyrophosphatase that hydrolyzes 7-methyl-GTP (m(7)GTP). May have a dual role in cell division arrest and in preventing the incorporation of modified nucleotides into cellular nucleic acids. The polypeptide is 7-methyl-GTP pyrophosphatase (Rhizobium johnstonii (strain DSM 114642 / LMG 32736 / 3841) (Rhizobium leguminosarum bv. viciae)).